The sequence spans 266 residues: Proteasome subunit beta type-7 (266 aa).

A propeptide spanning residues 1-33 is cleaved from the precursor; that stretch reads MNHDPFSWGRPADSTYGAYNTQIANAGASPMVN.

This sequence belongs to the peptidase T1B family. As to quaternary structure, the 26S proteasome consists of a 20S proteasome core and two 19S regulatory subunits. The 20S proteasome core is composed of 28 subunits that are arranged in four stacked rings, resulting in a barrel-shaped structure. The two end rings are each formed by seven alpha subunits, and the two central rings are each formed by seven beta subunits. The catalytic chamber with the active sites is on the inside of the barrel. Interacts with CIC1.

It is found in the cytoplasm. The protein resides in the nucleus. Non-catalytic component of the proteasome which degrades poly-ubiquitinated proteins in the cytoplasm and in the nucleus. It is essential for the regulated turnover of proteins and for the removal of misfolded proteins. The proteasome is a multicatalytic proteinase complex that is characterized by its ability to cleave peptides with Arg, Phe, Tyr, Leu, and Glu adjacent to the leaving group at neutral or slightly basic pH. It has an ATP-dependent proteolytic activity. PRE3 and PRE4 are necessary for the peptidyl-glutamyl-peptide-hydrolyzing activity. In Saccharomyces cerevisiae (strain ATCC 204508 / S288c) (Baker's yeast), this protein is Proteasome subunit beta type-7 (PRE4).